The following is a 648-amino-acid chain: Wilms tumor protein 1-interacting protein homolog (648 aa).

Disordered regions lie at residues 27-56, 142-291, and 306-327; these read DGMYGEPNPDMEKTKRMNGSSSTPGNKVYS, SNSL…SPRS, and SPRSSISSHSSRSSRSSRGSMS. Low complexity-rich tracts occupy residues 158 to 171 and 178 to 192; these read SPRSSLASSHSSQD and PRSSISSPRSSLVSP. 2 stretches are compositionally biased toward polar residues: residues 197-213 and 220-241; these read GTSVISPRSSYASTASD and PRTSLNSYDCGSKPSSNRTSGI. The span at 252–267 shows a compositional bias: low complexity; it reads PRSSTTSPRSSYSDSR. 3 consecutive LIM zinc-binding domains span residues 437–498, 502–561, and 562–631; these read GICV…SGFQ, EKCF…TVFA, and PKCA…RLKT.

Belongs to the zyxin/ajuba family.

Its subcellular location is the cell junction. The protein resides in the adherens junction. It is found in the nucleus. In terms of biological role, may monitor slit diaphragm protein assembly, a specialized adherens junction characteristic of podocytes. In case of podocyte injury, it shuttles into the nucleus and acts as a transcription regulator. Plays a role in the regulation of cell morphology and cytoskeletal organization. Acts as a transcriptional corepressor for snai1 and snai2/slug and plays a role in regulating neural crest development. The sequence is that of Wilms tumor protein 1-interacting protein homolog (wtip) from Danio rerio (Zebrafish).